The following is a 391-amino-acid chain: Putative F-box protein At1g47730 (391 aa).

Residues 1 to 12 show a composition bias toward basic and acidic residues; it reads MEQREEKTENIQ. The segment at 1 to 25 is disordered; that stretch reads MEQREEKTENIQRKRSRGKSSSSSL. Residues 19–68 enclose the F-box domain; the sequence is KSSSSSLPLDLTSEIFSRLPAKSVVRFRCVSKLWSSITTAPYFTNSFETR.

The protein is Putative F-box protein At1g47730 of Arabidopsis thaliana (Mouse-ear cress).